We begin with the raw amino-acid sequence, 555 residues long: 2-succinyl-5-enolpyruvyl-6-hydroxy-3-cyclohexene-1-carboxylate synthase (555 aa).

It belongs to the TPP enzyme family. MenD subfamily. Homodimer. It depends on Mg(2+) as a cofactor. Requires Mn(2+) as cofactor. Thiamine diphosphate serves as cofactor.

The enzyme catalyses isochorismate + 2-oxoglutarate + H(+) = 5-enolpyruvoyl-6-hydroxy-2-succinyl-cyclohex-3-ene-1-carboxylate + CO2. The protein operates within quinol/quinone metabolism; 1,4-dihydroxy-2-naphthoate biosynthesis; 1,4-dihydroxy-2-naphthoate from chorismate: step 2/7. It participates in quinol/quinone metabolism; menaquinone biosynthesis. In terms of biological role, catalyzes the thiamine diphosphate-dependent decarboxylation of 2-oxoglutarate and the subsequent addition of the resulting succinic semialdehyde-thiamine pyrophosphate anion to isochorismate to yield 2-succinyl-5-enolpyruvyl-6-hydroxy-3-cyclohexene-1-carboxylate (SEPHCHC). This chain is 2-succinyl-5-enolpyruvyl-6-hydroxy-3-cyclohexene-1-carboxylate synthase, found in Bacteroides thetaiotaomicron (strain ATCC 29148 / DSM 2079 / JCM 5827 / CCUG 10774 / NCTC 10582 / VPI-5482 / E50).